Reading from the N-terminus, the 363-residue chain is 3-isopropylmalate dehydrogenase (363 aa).

77 to 90 (GPKWQHLPPDQQPE) provides a ligand contact to NAD(+). Residues arginine 98, arginine 108, arginine 137, and aspartate 226 each contribute to the substrate site. Mg(2+)-binding residues include aspartate 226, aspartate 250, and aspartate 254. NAD(+) is bound at residue 284 to 296 (GSAPDIAGKNIAN).

It belongs to the isocitrate and isopropylmalate dehydrogenases family. LeuB type 1 subfamily. Homodimer. It depends on Mg(2+) as a cofactor. The cofactor is Mn(2+).

The protein resides in the cytoplasm. It catalyses the reaction (2R,3S)-3-isopropylmalate + NAD(+) = 4-methyl-2-oxopentanoate + CO2 + NADH. It participates in amino-acid biosynthesis; L-leucine biosynthesis; L-leucine from 3-methyl-2-oxobutanoate: step 3/4. Catalyzes the oxidation of 3-carboxy-2-hydroxy-4-methylpentanoate (3-isopropylmalate) to 3-carboxy-4-methyl-2-oxopentanoate. The product decarboxylates to 4-methyl-2 oxopentanoate. This is 3-isopropylmalate dehydrogenase from Buchnera aphidicola subsp. Pemphigus spyrothecae.